The following is a 387-amino-acid chain: Phosphoglycerate kinase (387 aa).

Substrate-binding positions include 21–23 (DLN), Arg36, 59–62 (HLGR), Arg113, and Arg146. Residues Lys197, Glu314, and 340–343 (GGDT) each bind ATP.

Belongs to the phosphoglycerate kinase family. As to quaternary structure, monomer.

It is found in the cytoplasm. It catalyses the reaction (2R)-3-phosphoglycerate + ATP = (2R)-3-phospho-glyceroyl phosphate + ADP. It functions in the pathway carbohydrate degradation; glycolysis; pyruvate from D-glyceraldehyde 3-phosphate: step 2/5. The chain is Phosphoglycerate kinase (pgk) from Vibrio cholerae serotype O1 (strain ATCC 39541 / Classical Ogawa 395 / O395).